The following is a 309-amino-acid chain: Ribonuclease Z (309 aa).

Positions 63, 65, 67, 68, 145, 216, and 274 each coordinate Zn(2+). Asp-67 acts as the Proton acceptor in catalysis.

Belongs to the RNase Z family. In terms of assembly, homodimer. It depends on Zn(2+) as a cofactor.

It carries out the reaction Endonucleolytic cleavage of RNA, removing extra 3' nucleotides from tRNA precursor, generating 3' termini of tRNAs. A 3'-hydroxy group is left at the tRNA terminus and a 5'-phosphoryl group is left at the trailer molecule.. Functionally, zinc phosphodiesterase, which displays some tRNA 3'-processing endonuclease activity. Probably involved in tRNA maturation, by removing a 3'-trailer from precursor tRNA. In Streptococcus equi subsp. equi (strain 4047), this protein is Ribonuclease Z.